The chain runs to 429 residues: Chaperone SurA (429 aa).

Residues 1–18 form the signal peptide; sequence MFKRIALVCALFSGVCFA. PpiC domains are found at residues 170-271 and 281-380; these read NLTY…KLVA and ITQT…EVIA.

It is found in the periplasm. The catalysed reaction is [protein]-peptidylproline (omega=180) = [protein]-peptidylproline (omega=0). In terms of biological role, chaperone involved in the correct folding and assembly of outer membrane proteins. Recognizes specific patterns of aromatic residues and the orientation of their side chains, which are found more frequently in integral outer membrane proteins. May act in both early periplasmic and late outer membrane-associated steps of protein maturation. In Legionella pneumophila subsp. pneumophila (strain Philadelphia 1 / ATCC 33152 / DSM 7513), this protein is Chaperone SurA.